A 472-amino-acid polypeptide reads, in one-letter code: MATTAGAKKGLWSTIRRIAASDRISGLIMLGFALTGLVLANLPATAHAFETVAETHLFIPYTNLDLPIGHWAQDGLLTIFFLTVGLELKQELTTGSLANPKAAAVPMLCAVGGMIAPPILFLAVTALFSQIGPGEPGTLILTTTGSSIPFSEMSHGWAVPTATDIAFSLAVLALFAKALPGSIRAFLMTLATVDDLLAIILIAVFFSSINAWYWFIGIAVCAAIWAYLVRLKKVPWIAVGIVGILAWIMMFEAGVHPTLAGVLVGLLTPSREMHGELSPRAERYANKLQPFSALLALPIFALFATGVHFESMSPLLLASPLVIALIVALVVGKPLGIITTAWLSTHVGGLKMAKGLRVRDMIPAAVACGIGFTVSFLIASLAYKNAELSAEARFGVLVASLIAAAISGVLLSRQSKRFEKTAAAAAADEEDDESIDGDGIGQPSHTTEPTTPTEHPGTLADGTASVEIDFRH.

10 helical membrane passes run 24 to 44 (ISGL…NLPA), 66 to 86 (LPIG…TVGL), 108 to 128 (LCAV…TALF), 156 to 176 (GWAV…ALFA), 196 to 216 (LLAI…YWFI), 234 to 254 (VPWI…FEAG), 290 to 310 (PFSA…VHFE), 312 to 332 (MSPL…LVVG), 361 to 381 (MIPA…IASL), and 392 to 412 (ARFG…VLLS). Positions 422-472 (AAAAAADEEDDESIDGDGIGQPSHTTEPTTPTEHPGTLADGTASVEIDFRH) are disordered. Over residues 427–436 (ADEEDDESID) the composition is skewed to acidic residues. Residues 445 to 456 (HTTEPTTPTEHP) show a composition bias toward low complexity.

This sequence belongs to the NhaA Na(+)/H(+) (TC 2.A.33) antiporter family.

The protein resides in the cell membrane. The catalysed reaction is Na(+)(in) + 2 H(+)(out) = Na(+)(out) + 2 H(+)(in). Functionally, na(+)/H(+) antiporter that extrudes sodium in exchange for external protons. The polypeptide is Na(+)/H(+) antiporter NhaA (Bifidobacterium longum (strain NCC 2705)).